The chain runs to 296 residues: Phosphatidylserine decarboxylase proenzyme (296 aa).

Active-site charge relay system; for autoendoproteolytic cleavage activity residues include Asp-100, His-157, and Ser-263. Ser-263 (schiff-base intermediate with substrate; via pyruvic acid; for decarboxylase activity) is an active-site residue. A Pyruvic acid (Ser); by autocatalysis modification is found at Ser-263.

This sequence belongs to the phosphatidylserine decarboxylase family. PSD-B subfamily. Prokaryotic type I sub-subfamily. As to quaternary structure, heterodimer of a large membrane-associated beta subunit and a small pyruvoyl-containing alpha subunit. Pyruvate serves as cofactor. Is synthesized initially as an inactive proenzyme. Formation of the active enzyme involves a self-maturation process in which the active site pyruvoyl group is generated from an internal serine residue via an autocatalytic post-translational modification. Two non-identical subunits are generated from the proenzyme in this reaction, and the pyruvate is formed at the N-terminus of the alpha chain, which is derived from the carboxyl end of the proenzyme. The autoendoproteolytic cleavage occurs by a canonical serine protease mechanism, in which the side chain hydroxyl group of the serine supplies its oxygen atom to form the C-terminus of the beta chain, while the remainder of the serine residue undergoes an oxidative deamination to produce ammonia and the pyruvoyl prosthetic group on the alpha chain. During this reaction, the Ser that is part of the protease active site of the proenzyme becomes the pyruvoyl prosthetic group, which constitutes an essential element of the active site of the mature decarboxylase.

It localises to the cell membrane. The catalysed reaction is a 1,2-diacyl-sn-glycero-3-phospho-L-serine + H(+) = a 1,2-diacyl-sn-glycero-3-phosphoethanolamine + CO2. It functions in the pathway phospholipid metabolism; phosphatidylethanolamine biosynthesis; phosphatidylethanolamine from CDP-diacylglycerol: step 2/2. Catalyzes the formation of phosphatidylethanolamine (PtdEtn) from phosphatidylserine (PtdSer). The sequence is that of Phosphatidylserine decarboxylase proenzyme from Actinobacillus pleuropneumoniae serotype 7 (strain AP76).